The sequence spans 299 residues: tRNA dimethylallyltransferase (299 aa).

10–17 (GATATGKS) contributes to the ATP binding site. 12–17 (TATGKS) is a substrate binding site. The tract at residues 35 to 38 (DSRQ) is interaction with substrate tRNA.

It belongs to the IPP transferase family. As to quaternary structure, monomer. Mg(2+) is required as a cofactor.

It carries out the reaction adenosine(37) in tRNA + dimethylallyl diphosphate = N(6)-dimethylallyladenosine(37) in tRNA + diphosphate. Its function is as follows. Catalyzes the transfer of a dimethylallyl group onto the adenine at position 37 in tRNAs that read codons beginning with uridine, leading to the formation of N6-(dimethylallyl)adenosine (i(6)A). The protein is tRNA dimethylallyltransferase of Rippkaea orientalis (strain PCC 8801 / RF-1) (Cyanothece sp. (strain PCC 8801)).